The chain runs to 305 residues: Acetylglutamate kinase (305 aa).

Substrate contacts are provided by residues 75 to 76 (GG), Arg-97, and Asn-202.

Belongs to the acetylglutamate kinase family. ArgB subfamily.

Its subcellular location is the cytoplasm. It carries out the reaction N-acetyl-L-glutamate + ATP = N-acetyl-L-glutamyl 5-phosphate + ADP. Its pathway is amino-acid biosynthesis; L-arginine biosynthesis; N(2)-acetyl-L-ornithine from L-glutamate: step 2/4. Functionally, catalyzes the ATP-dependent phosphorylation of N-acetyl-L-glutamate. This chain is Acetylglutamate kinase, found in Rhodospirillum centenum (strain ATCC 51521 / SW).